The following is a 275-amino-acid chain: 2,3,4,5-tetrahydropyridine-2,6-dicarboxylate N-succinyltransferase (275 aa).

It belongs to the transferase hexapeptide repeat family.

It localises to the cytoplasm. The enzyme catalyses (S)-2,3,4,5-tetrahydrodipicolinate + succinyl-CoA + H2O = (S)-2-succinylamino-6-oxoheptanedioate + CoA. Its pathway is amino-acid biosynthesis; L-lysine biosynthesis via DAP pathway; LL-2,6-diaminopimelate from (S)-tetrahydrodipicolinate (succinylase route): step 1/3. The polypeptide is 2,3,4,5-tetrahydropyridine-2,6-dicarboxylate N-succinyltransferase (Burkholderia ambifaria (strain MC40-6)).